We begin with the raw amino-acid sequence, 711 residues long: Ribosomal RNA large subunit methyltransferase K/L (711 aa).

The THUMP domain occupies 43–154; that stretch reads TLYRTLLWSR…RENLVISLDL (112 aa).

The protein belongs to the methyltransferase superfamily. RlmKL family.

The protein localises to the cytoplasm. The enzyme catalyses guanosine(2445) in 23S rRNA + S-adenosyl-L-methionine = N(2)-methylguanosine(2445) in 23S rRNA + S-adenosyl-L-homocysteine + H(+). It carries out the reaction guanosine(2069) in 23S rRNA + S-adenosyl-L-methionine = N(2)-methylguanosine(2069) in 23S rRNA + S-adenosyl-L-homocysteine + H(+). Its function is as follows. Specifically methylates the guanine in position 2445 (m2G2445) and the guanine in position 2069 (m7G2069) of 23S rRNA. The chain is Ribosomal RNA large subunit methyltransferase K/L from Haemophilus influenzae (strain 86-028NP).